The sequence spans 227 residues: Isopentenyl-diphosphate Delta-isomerase 1 (227 aa).

Lys36 contributes to the substrate binding site. His40 and His51 together coordinate Mg(2+). Positions 49 to 199 constitute a Nudix hydrolase domain; the sequence is LLHRAFSVFL…EIKITPWFKI (151 aa). Arg70 and Lys74 together coordinate substrate. Cys86 is an active-site residue. Ser87 serves as a coordination point for substrate. Residues Glu146 and Glu148 each coordinate Mg(2+). The active site involves Glu148. At Lys176 the chain carries N6-acetyllysine. The Microbody targeting signal signature appears at 225-227; it reads YRM.

The protein belongs to the IPP isomerase type 1 family. Monomer. Requires Mg(2+) as cofactor.

It localises to the peroxisome. The catalysed reaction is isopentenyl diphosphate = dimethylallyl diphosphate. Its pathway is isoprenoid biosynthesis; dimethylallyl diphosphate biosynthesis; dimethylallyl diphosphate from isopentenyl diphosphate: step 1/1. In terms of biological role, catalyzes the 1,3-allylic rearrangement of the homoallylic substrate isopentenyl (IPP) to its highly electrophilic allylic isomer, dimethylallyl diphosphate (DMAPP). This Homo sapiens (Human) protein is Isopentenyl-diphosphate Delta-isomerase 1 (IDI1).